Consider the following 926-residue polypeptide: UvrABC system protein A (926 aa).

31–38 (GPSGSGKS) is a binding site for ATP. The segment at 251–278 (CPEHGFSIPELSARLFSFNSPYGACPSC) adopts a C4-type zinc-finger fold. 2 ABC transporter domains span residues 308-568 (SGYF…PSSL) and 588-916 (PSGK…KYLR). An ATP-binding site is contributed by 620 to 627 (GVSGSGKS). A C4-type zinc finger spans residues 719–745 (CEACQGEGVIKVEMHFLPPVYVTCEVC).

It belongs to the ABC transporter superfamily. UvrA family. Forms a heterotetramer with UvrB during the search for lesions.

It localises to the cytoplasm. In terms of biological role, the UvrABC repair system catalyzes the recognition and processing of DNA lesions. UvrA is an ATPase and a DNA-binding protein. A damage recognition complex composed of 2 UvrA and 2 UvrB subunits scans DNA for abnormalities. When the presence of a lesion has been verified by UvrB, the UvrA molecules dissociate. The chain is UvrABC system protein A from Aquifex aeolicus (strain VF5).